The primary structure comprises 150 residues: UPF0098 protein CPn_0877/CP_0992/CPj0877/CpB0906 (150 aa).

Belongs to the UPF0098 family.

In Chlamydia pneumoniae (Chlamydophila pneumoniae), this protein is UPF0098 protein CPn_0877/CP_0992/CPj0877/CpB0906.